A 353-amino-acid chain; its full sequence is Photosystem II protein D1 (353 aa).

Threonine 2 carries the post-translational modification N-acetylthreonine. Residue threonine 2 is modified to Phosphothreonine. The next 3 helical transmembrane spans lie at 29-46 (YIGW…TATS), 118-133 (HFLL…EWEL), and 142-156 (WIAV…AATA). Residue histidine 118 participates in chlorophyll a binding. Tyrosine 126 contributes to the pheophytin a binding site. [CaMn4O5] cluster-binding residues include aspartate 170 and glutamate 189. A helical membrane pass occupies residues 197–218 (FHMLGVAGVFGGSLFSAMHGSL). A chlorophyll a-binding site is contributed by histidine 198. A quinone-binding positions include histidine 215 and 264 to 265 (SF). Residue histidine 215 coordinates Fe cation. Residue histidine 272 participates in Fe cation binding. A helical membrane pass occupies residues 274 to 288 (FLAAWPVVGIWFTAL). Residues histidine 332, glutamate 333, aspartate 342, and alanine 344 each contribute to the [CaMn4O5] cluster site. A propeptide spanning residues 345–353 (SVEAPSTNG) is cleaved from the precursor.

Belongs to the reaction center PufL/M/PsbA/D family. As to quaternary structure, PSII is composed of 1 copy each of membrane proteins PsbA, PsbB, PsbC, PsbD, PsbE, PsbF, PsbH, PsbI, PsbJ, PsbK, PsbL, PsbM, PsbT, PsbX, PsbY, PsbZ, Psb30/Ycf12, at least 3 peripheral proteins of the oxygen-evolving complex and a large number of cofactors. It forms dimeric complexes. Requires The D1/D2 heterodimer binds P680, chlorophylls that are the primary electron donor of PSII, and subsequent electron acceptors. It shares a non-heme iron and each subunit binds pheophytin, quinone, additional chlorophylls, carotenoids and lipids. D1 provides most of the ligands for the Mn4-Ca-O5 cluster of the oxygen-evolving complex (OEC). There is also a Cl(-1) ion associated with D1 and D2, which is required for oxygen evolution. The PSII complex binds additional chlorophylls, carotenoids and specific lipids. as cofactor. In terms of processing, tyr-161 forms a radical intermediate that is referred to as redox-active TyrZ, YZ or Y-Z. Post-translationally, C-terminally processed by CTPA; processing is essential to allow assembly of the oxygen-evolving complex and thus photosynthetic growth.

The protein localises to the plastid. Its subcellular location is the chloroplast thylakoid membrane. It catalyses the reaction 2 a plastoquinone + 4 hnu + 2 H2O = 2 a plastoquinol + O2. Functionally, photosystem II (PSII) is a light-driven water:plastoquinone oxidoreductase that uses light energy to abstract electrons from H(2)O, generating O(2) and a proton gradient subsequently used for ATP formation. It consists of a core antenna complex that captures photons, and an electron transfer chain that converts photonic excitation into a charge separation. The D1/D2 (PsbA/PsbD) reaction center heterodimer binds P680, the primary electron donor of PSII as well as several subsequent electron acceptors. The sequence is that of Photosystem II protein D1 from Acorus calamus (Sweet flag).